Here is a 156-residue protein sequence, read N- to C-terminus: Small ribosomal subunit protein uS7 (156 aa).

It belongs to the universal ribosomal protein uS7 family. Part of the 30S ribosomal subunit. Contacts proteins S9 and S11.

In terms of biological role, one of the primary rRNA binding proteins, it binds directly to 16S rRNA where it nucleates assembly of the head domain of the 30S subunit. Is located at the subunit interface close to the decoding center, probably blocks exit of the E-site tRNA. The polypeptide is Small ribosomal subunit protein uS7 (Salmonella agona (strain SL483)).